The primary structure comprises 284 residues: MNELTGESGSAAPSIALNDENTMPVLGLGVAELSDDETERAVSAALEVGCRLIDTAAAYGNEAAVGRAIAASGIPRAELFVTTKLATSDQGFKGAMDACEASLERLGLDYVDLYLIHWPAPALGTYVNSFGGMIQSRGNGHARSIGVSNFTEEYLTTVIDLTFVTPAVNQIELHPLLNQEALRKTNAEHNVVTQSYTPLALGKLNDHPTVNSVAAEYGKTASQVLLRWNLQLGNAVIFRSANAEHIASDFDVFDFELAAEHMDAINALNDGTRLRPDPDTYEGS.

The Proton donor role is filled by Y59. 7 residues coordinate NADPH: L199, I237, R239, S240, A241, S248, and R275.

This sequence belongs to the aldo/keto reductase family.

The polypeptide is Aldo-keto reductase MAV_3816 (Mycobacterium avium (strain 104)).